Reading from the N-terminus, the 317-residue chain is Ribose-phosphate pyrophosphokinase (317 aa).

ATP is bound by residues 43 to 45 (DGE) and 102 to 103 (RQ). The Mg(2+) site is built by histidine 136 and aspartate 175. Residue lysine 198 is part of the active site. Residues arginine 200, aspartate 224, and 228–232 (DTAGT) contribute to the D-ribose 5-phosphate site.

This sequence belongs to the ribose-phosphate pyrophosphokinase family. Class I subfamily. Homohexamer. Requires Mg(2+) as cofactor.

The protein localises to the cytoplasm. The enzyme catalyses D-ribose 5-phosphate + ATP = 5-phospho-alpha-D-ribose 1-diphosphate + AMP + H(+). It participates in metabolic intermediate biosynthesis; 5-phospho-alpha-D-ribose 1-diphosphate biosynthesis; 5-phospho-alpha-D-ribose 1-diphosphate from D-ribose 5-phosphate (route I): step 1/1. In terms of biological role, involved in the biosynthesis of the central metabolite phospho-alpha-D-ribosyl-1-pyrophosphate (PRPP) via the transfer of pyrophosphoryl group from ATP to 1-hydroxyl of ribose-5-phosphate (Rib-5-P). The sequence is that of Ribose-phosphate pyrophosphokinase from Corynebacterium ammoniagenes (Brevibacterium ammoniagenes).